We begin with the raw amino-acid sequence, 218 residues long: Large ribosomal subunit protein uL3 (218 aa).

At Q154 the chain carries N5-methylglutamine.

Belongs to the universal ribosomal protein uL3 family. Part of the 50S ribosomal subunit. Forms a cluster with proteins L14 and L19. In terms of processing, methylated by PrmB.

One of the primary rRNA binding proteins, it binds directly near the 3'-end of the 23S rRNA, where it nucleates assembly of the 50S subunit. The polypeptide is Large ribosomal subunit protein uL3 (Polynucleobacter asymbioticus (strain DSM 18221 / CIP 109841 / QLW-P1DMWA-1) (Polynucleobacter necessarius subsp. asymbioticus)).